Here is a 602-residue protein sequence, read N- to C-terminus: Aspartate--tRNA(Asp/Asn) ligase (602 aa).

E176 contacts L-aspartate. Positions Q200 to K203 are aspartate. Residues R222 and H452 each contribute to the L-aspartate site. R222–E224 contributes to the ATP binding site. ATP is bound at residue E490. R497 provides a ligand contact to L-aspartate. Position 542-545 (G542–R545) interacts with ATP.

It belongs to the class-II aminoacyl-tRNA synthetase family. Type 1 subfamily. As to quaternary structure, homodimer.

The protein resides in the cytoplasm. It catalyses the reaction tRNA(Asx) + L-aspartate + ATP = L-aspartyl-tRNA(Asx) + AMP + diphosphate. Its function is as follows. Aspartyl-tRNA synthetase with relaxed tRNA specificity since it is able to aspartylate not only its cognate tRNA(Asp) but also tRNA(Asn). Reaction proceeds in two steps: L-aspartate is first activated by ATP to form Asp-AMP and then transferred to the acceptor end of tRNA(Asp/Asn). This is Aspartate--tRNA(Asp/Asn) ligase from Rickettsia bellii (strain OSU 85-389).